The primary structure comprises 167 residues: Small ribosomal subunit protein uS5 (167 aa).

Residues Leu11–Val74 enclose the S5 DRBM domain.

This sequence belongs to the universal ribosomal protein uS5 family. Part of the 30S ribosomal subunit. Contacts proteins S4 and S8.

Functionally, with S4 and S12 plays an important role in translational accuracy. Located at the back of the 30S subunit body where it stabilizes the conformation of the head with respect to the body. In Escherichia coli O139:H28 (strain E24377A / ETEC), this protein is Small ribosomal subunit protein uS5.